Reading from the N-terminus, the 428-residue chain is Gamma-glutamyl phosphate reductase (428 aa).

It belongs to the gamma-glutamyl phosphate reductase family.

Its subcellular location is the cytoplasm. The catalysed reaction is L-glutamate 5-semialdehyde + phosphate + NADP(+) = L-glutamyl 5-phosphate + NADPH + H(+). It participates in amino-acid biosynthesis; L-proline biosynthesis; L-glutamate 5-semialdehyde from L-glutamate: step 2/2. In terms of biological role, catalyzes the NADPH-dependent reduction of L-glutamate 5-phosphate into L-glutamate 5-semialdehyde and phosphate. The product spontaneously undergoes cyclization to form 1-pyrroline-5-carboxylate. This is Gamma-glutamyl phosphate reductase from Streptomyces coelicolor (strain ATCC BAA-471 / A3(2) / M145).